The sequence spans 336 residues: DNA-directed RNA polymerase subunit alpha (336 aa).

An alpha N-terminal domain (alpha-NTD) region spans residues 1–232; sequence MIQKNWQELI…DQLGVFVNFD (232 aa). Positions 248-336 are alpha C-terminal domain (alpha-CTD); sequence FNPALLKKVD…DLAKRYEDQY (89 aa).

This sequence belongs to the RNA polymerase alpha chain family. Homodimer. The RNAP catalytic core consists of 2 alpha, 1 beta, 1 beta' and 1 omega subunit. When a sigma factor is associated with the core the holoenzyme is formed, which can initiate transcription.

The enzyme catalyses RNA(n) + a ribonucleoside 5'-triphosphate = RNA(n+1) + diphosphate. Its function is as follows. DNA-dependent RNA polymerase catalyzes the transcription of DNA into RNA using the four ribonucleoside triphosphates as substrates. In Rhizobium radiobacter (Agrobacterium tumefaciens), this protein is DNA-directed RNA polymerase subunit alpha.